We begin with the raw amino-acid sequence, 72 residues long: MRVEQIAAKALKKLKDDRYKLALVVAKRAEELANGAEPLVNLDKNKYKYTDIALHEIAEDKIVLEGFVETSK.

This sequence belongs to the RNA polymerase subunit omega family. As to quaternary structure, the RNAP catalytic core consists of 2 alpha, 1 beta, 1 beta' and 1 omega subunit. When a sigma factor is associated with the core the holoenzyme is formed, which can initiate transcription.

It carries out the reaction RNA(n) + a ribonucleoside 5'-triphosphate = RNA(n+1) + diphosphate. Promotes RNA polymerase assembly. Latches the N- and C-terminal regions of the beta' subunit thereby facilitating its interaction with the beta and alpha subunits. This Campylobacter lari (strain RM2100 / D67 / ATCC BAA-1060) protein is DNA-directed RNA polymerase subunit omega.